Reading from the N-terminus, the 130-residue chain is Small ribosomal subunit protein uS9 (130 aa).

This sequence belongs to the universal ribosomal protein uS9 family.

The polypeptide is Small ribosomal subunit protein uS9 (Streptococcus equi subsp. zooepidemicus (strain H70)).